A 308-amino-acid polypeptide reads, in one-letter code: Very-long-chain enoyl-CoA reductase (308 aa).

Residues 1–86 (MKHYEVEIRD…YFRDLGAQIS (86 aa)) lie on the Cytoplasmic side of the membrane. Position 22 is an N6-acetyllysine (K22). At S58 the chain carries Phosphoserine. Residue K60 is modified to N6-acetyllysine. The chain crosses the membrane as a helical span at residues 87-106 (WVTVFLTEYAGPLFIYLLFY). Residues 107–124 (FRVPFIYGRKYDFTSSRH) lie on the Lumenal side of the membrane. A helical membrane pass occupies residues 125 to 147 (TVVHLACMCHSFHYIKRLLETLF). The Cytoplasmic segment spans residues 148-158 (VHRFSHGTMPL). The helical transmembrane segment at 159–180 (RNIFKNCTYYWGFAAWMAYYIN) threads the bilayer. The Lumenal portion of the chain corresponds to 181–189 (HPLYTPPTY). A helical transmembrane segment spans residues 190 to 216 (GVQQVKLALAVFVICQLGNFSIHMALR). Over 217–245 (DLRPAGSKTRKIPYPTKNPFTWLFLLVSC) the chain is Cytoplasmic. Residues 246-262 (PNYTYEVGSWIGFAILT) form a helical membrane-spanning segment. The Lumenal segment spans residues 263-264 (QC). The chain crosses the membrane as a helical span at residues 265-292 (VPVALFSLVGFTQMTIWAKGKHRSYLKE). The Cytoplasmic portion of the chain corresponds to 293–308 (FRDYPPLRMPIIPFLL).

This sequence belongs to the steroid 5-alpha reductase family. In terms of assembly, interacts with ELOVL1 and LASS2. In terms of processing, glycosylated.

Its subcellular location is the endoplasmic reticulum membrane. It carries out the reaction a very-long-chain 2,3-saturated fatty acyl-CoA + NADP(+) = a very-long-chain (2E)-enoyl-CoA + NADPH + H(+). The enzyme catalyses octadecanoyl-CoA + NADP(+) = (2E)-octadecenoyl-CoA + NADPH + H(+). It catalyses the reaction (2E,7Z,10Z,13Z,16Z)-docosapentaenoyl-CoA + NADPH + H(+) = (7Z,10Z,13Z,16Z)-docosatetraenoyl-CoA + NADP(+). The catalysed reaction is (2E,7Z,10Z,13Z,16Z,19Z)-docosahexaenoyl-CoA + NADPH + H(+) = (7Z,10Z,13Z,16Z,19Z)-docosapentaenoyl-CoA + NADP(+). It carries out the reaction (2E,8Z,11Z,14Z)-eicosatetraenoyl-CoA + NADPH + H(+) = (8Z,11Z,14Z)-eicosatrienoyl-CoA + NADP(+). The enzyme catalyses (2E)-hexadecenoyl-CoA + NADPH + H(+) = hexadecanoyl-CoA + NADP(+). The protein operates within lipid metabolism; fatty acid biosynthesis. It functions in the pathway lipid metabolism; sphingolipid metabolism. Functionally, involved in both the production of very long-chain fatty acids for sphingolipid synthesis and the degradation of the sphingosine moiety in sphingolipids through the sphingosine 1-phosphate metabolic pathway. Catalyzes the last of the four reactions of the long-chain fatty acids elongation cycle. This endoplasmic reticulum-bound enzymatic process, allows the addition of 2 carbons to the chain of long- and very long-chain fatty acids/VLCFAs per cycle. This enzyme reduces the trans-2,3-enoyl-CoA fatty acid intermediate to an acyl-CoA that can be further elongated by entering a new cycle of elongation. Thereby, it participates in the production of VLCFAs of different chain lengths that are involved in multiple biological processes as precursors of membrane lipids and lipid mediators. Catalyzes the saturation step of the sphingosine 1-phosphate metabolic pathway, the conversion of trans-2-hexadecenoyl-CoA to palmitoyl-CoA. The chain is Very-long-chain enoyl-CoA reductase (Tecr) from Mus musculus (Mouse).